A 233-amino-acid chain; its full sequence is Octanoyltransferase (233 aa).

A BPL/LPL catalytic domain is found at 36–211 (DTTPDEIWLV…EFTRQLGYPT (176 aa)). Residues 75-82 (RGGQVTYH), 142-144 (SLG), and 155-157 (GLA) contribute to the substrate site. Cysteine 173 (acyl-thioester intermediate) is an active-site residue.

It belongs to the LipB family.

It localises to the cytoplasm. The enzyme catalyses octanoyl-[ACP] + L-lysyl-[protein] = N(6)-octanoyl-L-lysyl-[protein] + holo-[ACP] + H(+). It participates in protein modification; protein lipoylation via endogenous pathway; protein N(6)-(lipoyl)lysine from octanoyl-[acyl-carrier-protein]: step 1/2. In terms of biological role, catalyzes the transfer of endogenously produced octanoic acid from octanoyl-acyl-carrier-protein onto the lipoyl domains of lipoate-dependent enzymes. Lipoyl-ACP can also act as a substrate although octanoyl-ACP is likely to be the physiological substrate. The polypeptide is Octanoyltransferase (Yersinia pestis bv. Antiqua (strain Antiqua)).